The following is a 262-amino-acid chain: Acyl-[acyl-carrier-protein]--UDP-N-acetylglucosamine O-acyltransferase (262 aa).

This sequence belongs to the transferase hexapeptide repeat family. LpxA subfamily. Homotrimer.

The protein localises to the cytoplasm. It carries out the reaction a (3R)-hydroxyacyl-[ACP] + UDP-N-acetyl-alpha-D-glucosamine = a UDP-3-O-[(3R)-3-hydroxyacyl]-N-acetyl-alpha-D-glucosamine + holo-[ACP]. The protein operates within glycolipid biosynthesis; lipid IV(A) biosynthesis; lipid IV(A) from (3R)-3-hydroxytetradecanoyl-[acyl-carrier-protein] and UDP-N-acetyl-alpha-D-glucosamine: step 1/6. Its function is as follows. Involved in the biosynthesis of lipid A, a phosphorylated glycolipid that anchors the lipopolysaccharide to the outer membrane of the cell. This Burkholderia vietnamiensis (strain G4 / LMG 22486) (Burkholderia cepacia (strain R1808)) protein is Acyl-[acyl-carrier-protein]--UDP-N-acetylglucosamine O-acyltransferase.